A 386-amino-acid chain; its full sequence is Cysteine protease Amb a 11.0101 (386 aa).

The first 22 residues, 1 to 22, serve as a signal peptide directing secretion; the sequence is MEINKLVCFSFSLVLILGLVES. The interval 6–20 is T-cell epitope. MHC class II peptide able to activate CD(4+) T cells of the ragweed pollen-allergic patients indicated by significantly increased IL-2 production compared to non-allergic individuals. Not recognized by IgE of the patients allergic to ragweed pollen; the sequence is LVCFSFSLVLILGLV. A propeptide spans 23–108 (activation peptide); sequence FHYHERELES…SKISHFQALR (86 aa). A glycan (N-linked (GlcNAc...) (complex) asparagine) is linked at asparagine 127. 3 disulfides stabilise this stretch: cysteine 152-cysteine 193, cysteine 186-cysteine 226, and cysteine 283-cysteine 334. Cysteine 155 is a catalytic residue. Residues 173–186 form a B-cell epitope. Binds to IgE of the patients allergic to ragweed pollen region; sequence GKLVKFSEQQLVDC. Residues histidine 289 and asparagine 310 contribute to the active site. The tract at residues 340–377 is disordered; sequence SSFPIMNDPNPPKDDPNGPKDDPDAPKDPKFKTTQRLQ. Positions 350 to 370 are enriched in basic and acidic residues; sequence PPKDDPNGPKDDPDAPKDPKF. A propeptide spans 371 to 386 (removed in mature form); the sequence is KTTQRLQGIRTKLLEL.

The protein belongs to the peptidase C1 family. As to quaternary structure, homodimer. Autocatalytic proteolytic cleavage of N-terminal activation peptide. In terms of processing, N-glycosylated. Glycosylation is not required for binding to IgE. Expressed in pollen (at protein and mRNA level).

Activated by L-cysteine. Inhibited by cysteine protease inhibitor E64 (L-trans-epoxysuccinyl-leucylamide-(4-guanido)-butane). Inhibited by cysteine/serine protease inhibitor leupeptin. Not inhibited by serine protease inhibitors 4-(2-aminoethyl)benzenesulfonyl fluoride hydrochloride (AEBSF) and phenylmethanesulfonyl fluoride (PMSF), metallo protease inhibitor bestatin or aspartic protease inhibitor pepstatin A. In terms of biological role, cysteine protease. Hydrolyzes casein and synthetic peptide Boc-Val-Leu-Lys-7-amino-4-methylcoumarin (Boc-VLK-AMC) in vitro. The protein is Cysteine protease Amb a 11.0101 of Ambrosia artemisiifolia (Common ragweed).